We begin with the raw amino-acid sequence, 280 residues long: Phosphatidylglycerol--prolipoprotein diacylglyceryl transferase (280 aa).

The next 3 membrane-spanning stretches (helical) occupy residues 15-35, 60-80, and 90-110; these read IFSI…IFAL, FIGL…PVFF, and IWEG…VLLF. Arginine 138 lines the a 1,2-diacyl-sn-glycero-3-phospho-(1'-sn-glycerol) pocket. The next 2 membrane-spanning stretches (helical) occupy residues 217 to 237 and 257 to 277; these read MPFG…RIFL and GQLL…NIYV.

This sequence belongs to the Lgt family.

Its subcellular location is the cell membrane. The enzyme catalyses L-cysteinyl-[prolipoprotein] + a 1,2-diacyl-sn-glycero-3-phospho-(1'-sn-glycerol) = an S-1,2-diacyl-sn-glyceryl-L-cysteinyl-[prolipoprotein] + sn-glycerol 1-phosphate + H(+). Its pathway is protein modification; lipoprotein biosynthesis (diacylglyceryl transfer). Its function is as follows. Catalyzes the transfer of the diacylglyceryl group from phosphatidylglycerol to the sulfhydryl group of the N-terminal cysteine of a prolipoprotein, the first step in the formation of mature lipoproteins. This Buchnera aphidicola subsp. Baizongia pistaciae (strain Bp) protein is Phosphatidylglycerol--prolipoprotein diacylglyceryl transferase.